A 323-amino-acid polypeptide reads, in one-letter code: NADH-ubiquinone oxidoreductase chain 1 (323 aa).

8 consecutive transmembrane segments (helical) span residues 8–28 (LLNP…LTLI), 74–94 (LLFI…WLPL), 105–125 (LGML…LGSG), 150–170 (SLGL…LTTF), 176–196 (TIWL…STLA), 227–247 (LFFL…TILF), 258–278 (ELTS…FLWV), and 298–318 (FLPI…FTGS).

It belongs to the complex I subunit 1 family.

The protein resides in the mitochondrion inner membrane. The enzyme catalyses a ubiquinone + NADH + 5 H(+)(in) = a ubiquinol + NAD(+) + 4 H(+)(out). Core subunit of the mitochondrial membrane respiratory chain NADH dehydrogenase (Complex I) that is believed to belong to the minimal assembly required for catalysis. Complex I functions in the transfer of electrons from NADH to the respiratory chain. The immediate electron acceptor for the enzyme is believed to be ubiquinone. In Latimeria chalumnae (Coelacanth), this protein is NADH-ubiquinone oxidoreductase chain 1 (MT-ND1).